The sequence spans 511 residues: Maturase K (511 aa).

It belongs to the intron maturase 2 family. MatK subfamily.

The protein resides in the plastid. Its subcellular location is the chloroplast. Its function is as follows. Usually encoded in the trnK tRNA gene intron. Probably assists in splicing its own and other chloroplast group II introns. This is Maturase K from Hordeum vulgare (Barley).